Consider the following 227-residue polypeptide: DNA repair protein RecO (227 aa).

Belongs to the RecO family.

Its function is as follows. Involved in DNA repair and RecF pathway recombination. This is DNA repair protein RecO from Pseudomonas putida (strain ATCC 700007 / DSM 6899 / JCM 31910 / BCRC 17059 / LMG 24140 / F1).